The chain runs to 79 residues: Putative membrane protein insertion efficiency factor (79 aa).

Belongs to the UPF0161 family.

Its subcellular location is the cell inner membrane. In terms of biological role, could be involved in insertion of integral membrane proteins into the membrane. The sequence is that of Putative membrane protein insertion efficiency factor from Prochlorococcus marinus (strain NATL2A).